A 220-amino-acid polypeptide reads, in one-letter code: Deoxyribose-phosphate aldolase (220 aa).

Aspartate 89 functions as the Proton donor/acceptor in the catalytic mechanism. Lysine 151 functions as the Schiff-base intermediate with acetaldehyde in the catalytic mechanism. The Proton donor/acceptor role is filled by lysine 180.

Belongs to the DeoC/FbaB aldolase family. DeoC type 1 subfamily.

Its subcellular location is the cytoplasm. The catalysed reaction is 2-deoxy-D-ribose 5-phosphate = D-glyceraldehyde 3-phosphate + acetaldehyde. The protein operates within carbohydrate degradation; 2-deoxy-D-ribose 1-phosphate degradation; D-glyceraldehyde 3-phosphate and acetaldehyde from 2-deoxy-alpha-D-ribose 1-phosphate: step 2/2. Its function is as follows. Catalyzes a reversible aldol reaction between acetaldehyde and D-glyceraldehyde 3-phosphate to generate 2-deoxy-D-ribose 5-phosphate. The chain is Deoxyribose-phosphate aldolase from Streptococcus sanguinis (strain SK36).